Reading from the N-terminus, the 2319-residue chain is AT-rich interactive domain-containing protein 1B (2319 aa).

Low complexity-rich tracts occupy residues 1–21 (MAARAAAAAAAAAARARARAG) and 43–56 (GARGAAAAAAAPGP). Disordered regions lie at residues 1-74 (MAAR…VHHH), 155-306 (VGEA…GGGG), 321-414 (APAS…GAGA), 487-546 (RFAG…AGAA), 577-1062 (QQRS…LMNT), and 1085-1129 (DMMS…KITK). A2 carries the N-acetylalanine modification. A compositionally biased stretch (gly residues) spans 57 to 68 (MLGGGGDGGGGL). Residues 165-188 (QQHHHHHHAHHHHHHAHHLHHHHA) are compositionally biased toward basic residues. 2 stretches are compositionally biased toward low complexity: residues 189-215 (LQQQLNQFQQQQQQQQQQQQQQQQQQH) and 343-363 (SPGMGMMHSASAAAAGAPGSM). Over residues 365–379 (PLQNSHEGYPNSQCN) the composition is skewed to polar residues. The span at 388 to 414 (GAGGGGGGGGGGGGGSGGGGGGGGAGA) shows a compositional bias: gly residues. An Asymmetric dimethylarginine modification is found at R487. Over residues 489-510 (AGQNQHPSGATPTLNQLLTSPS) the composition is skewed to polar residues. An LXXLL motif is present at residues 502–506 (LNQLL). The segment covering 536 to 546 (PQSQAAAAGAA) has biased composition (low complexity). 2 positions are modified to phosphoserine: S585 and S599. R608 carries the asymmetric dimethylarginine modification. The span at 620-630 (SQPQQSSPYPG) shows a compositional bias: low complexity. R640 is subject to Asymmetric dimethylarginine. Composition is skewed to low complexity over residues 651 to 670 (GAMAGMQYPQQQMPPQYGQQ), 677 to 687 (QQGQQPYYSQQ), 695 to 712 (PQAQYLPSQSQQRYQPQQ), 767 to 783 (SSAVSASGSTSSQGDQS), 811 to 832 (GSPVGSNQSRSGPISPASIPGS), and 840 to 849 (GSQSESSSHP). The span at 866-880 (TQRNPQMAQYGPQQT) shows a compositional bias: polar residues. Residues 881-892 (GPSMSPHPSPGG) show a composition bias toward low complexity. Composition is skewed to polar residues over residues 899–923 (SSFQQSNSSGTYGPQMSQYGPQGNY) and 947–958 (SANNQMHGQGPS). Composition is skewed to low complexity over residues 980–994 (PGNMSSMTPSSPGMS) and 1014–1028 (EAAAAVMQAAANSAQ). Residues 1029-1062 (SRQGSFPGMNQSGLMASSSPYSQPMNNSSSLMNT) show a composition bias toward polar residues. Residues 1136-1227 (EPERKLWVDR…YLFAFECKIE (92 aa)) enclose the ARID domain. 4 disordered regions span residues 1230–1334 (EEPP…QQGM), 1346–1443 (EPNK…PNYK), 1475–1647 (NQYG…FLPS), and 1782–1852 (DHNA…KQAS). 2 stretches are compositionally biased toward polar residues: residues 1254–1273 (ANSGSLQGPQTPQSTGSNSM) and 1287–1304 (STPHGQMTPMQGGRSSTI). The span at 1305 to 1319 (SVHDPFSDVSDSSFP) shows a compositional bias: low complexity. Composition is skewed to polar residues over residues 1320–1334 (KRNSMTPNAPYQQGM) and 1364–1388 (PFMTQGQMPNSSMQDMYNQSPSGAM). Residues 1426–1440 (PPYGGHQPGLYPQQP) are compositionally biased toward low complexity. The short motif at 1441-1460 (NYKRHMDGMYGPPAKRHEGD) is the Nuclear localization signal element. Composition is skewed to polar residues over residues 1522-1534 (LQSSSSEGPQQNM) and 1579-1601 (ESQWPSHVSQRQPYMSSSASMQP). Phosphoserine occurs at positions 1625, 1638, and 1642. Polar residues predominate over residues 1627–1641 (ASFQRSLENRMSPSK). The span at 1782 to 1791 (DHNAARKDDS) shows a compositional bias: basic and acidic residues. Position 1798 is a phosphoserine (S1798). Positions 1799–1823 (GKEEEDAECIDDDEEDEEDEEEDSE) are enriched in acidic residues. The segment covering 1842 to 1852 (ADPKEKPKQAS) has biased composition (basic and acidic residues). An N6-acetyllysine modification is found at K1860. Disordered regions lie at residues 1904-1941 (FESKMEIPPRRRPPPPLSSAGRKKEQEGKGDSEEQQEK) and 1954-1973 (RPGALPEDANPGPQTESSKF). The span at 1925-1940 (RKKEQEGKGDSEEQQE) shows a compositional bias: basic and acidic residues. An LXXLL motif is present at residues 2119-2123 (LDGLL).

Component of SWI/SNF chromatin remodeling complexes, in some of which it can be mutually exclusive with ARID1B/BAF250B. The canonical complex contains a catalytic subunit (either SMARCA4/BRG1/BAF190A or SMARCA2/BRM/BAF190B) and at least SMARCE1, ACTL6A/BAF53, SMARCC1/BAF155, SMARCC2/BAF170, and SMARCB1/SNF5/BAF47. Other subunits specific to each of the complexes may also be present permitting several possible combinations developmentally and tissue specific. Component of the BAF (SWI/SNF-A) complex, which includes at least actin (ACTB), ARID1A/BAF250A, ARID1B/BAF250B, SMARCA2/BRM, SMARCA4/BRG1/BAF190A, ACTL6A/BAF53, ACTL6B/BAF53B, SMARCE1/BAF57, SMARCC1/BAF155, SMARCC2/BAF170, SMARCB1/SNF5/INI1, and one or more SMARCD1/BAF60A, SMARCD2/BAF60B, or SMARCD3/BAF60C. In muscle cells, the BAF complex also contains DPF3. Component of neural progenitors-specific chromatin remodeling complex (npBAF complex) composed of at least, ARID1A/BAF250A or ARID1B/BAF250B, SMARCD1/BAF60A, SMARCD3/BAF60C, SMARCA2/BRM/BAF190B, SMARCA4/BRG1/BAF190A, SMARCB1/BAF47, SMARCC1/BAF155, SMARCE1/BAF57, SMARCC2/BAF170, PHF10/BAF45A, ACTL6A/BAF53A and actin. Component of neuron-specific chromatin remodeling complex (nBAF complex) composed of at least, ARID1A/BAF250A or ARID1B/BAF250B, SMARCD1/BAF60A, SMARCD3/BAF60C, SMARCA2/BRM/BAF190B, SMARCA4/BRG1/BAF190A, SMARCB1/BAF47, SMARCC1/BAF155, SMARCE1/BAF57, SMARCC2/BAF170, DPF1/BAF45B, DPF3/BAF45C, ACTL6B/BAF53B and actin. Component of a SWI/SNF-like EBAFb complex, at least composed of SMARCA4/BRG1/BAF190A, SMARCB1/BAF47/SNF5, ACTL6A/BAF53A, SMARCE1/BAF57, SMARCD1/BAF60A, SMARCD2/BAF60B, SMARCC1/BAF155, SMARCC2/BAF170, ARID1B/BAF250B, MLLT1/ENL and actin. Interacts through its C-terminus with SMARCA2/BRM/BAF190B and SMARCA4/BRG1/BAF190A. Interacts with SMARCC1/BAF155. In terms of tissue distribution, widely expressed with high levels in heart, skeletal muscle and kidney.

The protein localises to the nucleus. Involved in transcriptional activation and repression of select genes by chromatin remodeling (alteration of DNA-nucleosome topology). Component of SWI/SNF chromatin remodeling complexes that carry out key enzymatic activities, changing chromatin structure by altering DNA-histone contacts within a nucleosome in an ATP-dependent manner. Belongs to the neural progenitors-specific chromatin remodeling complex (npBAF complex) and the neuron-specific chromatin remodeling complex (nBAF complex). During neural development a switch from a stem/progenitor to a postmitotic chromatin remodeling mechanism occurs as neurons exit the cell cycle and become committed to their adult state. The transition from proliferating neural stem/progenitor cells to postmitotic neurons requires a switch in subunit composition of the npBAF and nBAF complexes. As neural progenitors exit mitosis and differentiate into neurons, npBAF complexes which contain ACTL6A/BAF53A and PHF10/BAF45A, are exchanged for homologous alternative ACTL6B/BAF53B and DPF1/BAF45B or DPF3/BAF45C subunits in neuron-specific complexes (nBAF). The npBAF complex is essential for the self-renewal/proliferative capacity of the multipotent neural stem cells. The nBAF complex along with CREST plays a role regulating the activity of genes essential for dendrite growth. Binds DNA non-specifically. This chain is AT-rich interactive domain-containing protein 1B, found in Homo sapiens (Human).